The chain runs to 644 residues: MVRMMIRRLSSQASRFVQPRLLETGTLRIALINCPNELLFCCERGFSTFSDRNLSYRDKLSSGLVGIKADDAVDLFRDMIQSRPLPTVIDFNRLFSAIAKTKQYELVLALCKQMESKGIAHSIYTLSIMINCFCRCRKLSYAFSTMGKIMKLGYEPDTVIFNTLLNGLCLECRVSEALELVDRMVEMGHKPTLITLNTLVNGLCLNGKVSDAVVLIDRMVETGFQPNEVTYGPVLNVMCKSGQTALAMELLRKMEERNIKLDAVKYSIIIDGLCKDGSLDNAFNLFNEMEIKGFKADIITYNTLIGGFCNAGRWDDGAKLLRDMIKRKISPNVVTFSVLIDSFVKEGKLREADQLLKEMMQRGIAPNTITYNSLIDGFCKENRLEEAIQMVDLMISKGCDPDIMTFNILINGYCKANRIDDGLELFREMSLRGVIANTVTYNTLVQGFCQSGKLEVAKKLFQEMVSRRVRPDIVSYKILLDGLCDNGELEKALEIFGKIEKSKMELDIGIYMIIIHGMCNASKVDDAWDLFCSLPLKGVKLDARAYNIMISELCRKDSLSKADILFRKMTEEGHAPDELTYNILIRAHLGDDDATTAAELIEEMKSSGFPADVSTVKMVINMLSSGELDKSFLDMLSTTRASLK.

A mitochondrion-targeting transit peptide spans 1–53 (MVRMMIRRLSSQASRFVQPRLLETGTLRIALINCPNELLFCCERGFSTFSDRN). 15 PPR repeats span residues 87–121 (TVIDFNRLFSAIAKTKQYELVLALCKQMESKGIAH), 122–156 (SIYTLSIMINCFCRCRKLSYAFSTMGKIMKLGYEP), 157–191 (DTVIFNTLLNGLCLECRVSEALELVDRMVEMGHKP), 192–226 (TLITLNTLVNGLCLNGKVSDAVVLIDRMVETGFQP), 227–261 (NEVTYGPVLNVMCKSGQTALAMELLRKMEERNIKL), 262–296 (DAVKYSIIIDGLCKDGSLDNAFNLFNEMEIKGFKA), 297–331 (DIITYNTLIGGFCNAGRWDDGAKLLRDMIKRKISP), 332–366 (NVVTFSVLIDSFVKEGKLREADQLLKEMMQRGIAP), 367–401 (NTITYNSLIDGFCKENRLEEAIQMVDLMISKGCDP), 402–436 (DIMTFNILINGYCKANRIDDGLELFREMSLRGVIA), 437–471 (NTVTYNTLVQGFCQSGKLEVAKKLFQEMVSRRVRP), 472–506 (DIVSYKILLDGLCDNGELEKALEIFGKIEKSKMEL), 507–541 (DIGIYMIIIHGMCNASKVDDAWDLFCSLPLKGVKL), 542–576 (DARAYNIMISELCRKDSLSKADILFRKMTEEGHAP), and 577–611 (DELTYNILIRAHLGDDDATTAAELIEEMKSSGFPA).

Belongs to the PPR family. P subfamily.

The protein resides in the mitochondrion. This is Pentatricopeptide repeat-containing protein At1g12775, mitochondrial from Arabidopsis thaliana (Mouse-ear cress).